Consider the following 291-residue polypeptide: tRNA U34 carboxymethyltransferase (291 aa).

Carboxy-S-adenosyl-L-methionine-binding positions include K61, W75, K80, G100, 122 to 124, 149 to 150, Y169, and R284; these read DPS and VE.

The protein belongs to the class I-like SAM-binding methyltransferase superfamily. CmoB family. As to quaternary structure, homotetramer.

The catalysed reaction is carboxy-S-adenosyl-L-methionine + 5-hydroxyuridine(34) in tRNA = 5-carboxymethoxyuridine(34) in tRNA + S-adenosyl-L-homocysteine + H(+). Its function is as follows. Catalyzes carboxymethyl transfer from carboxy-S-adenosyl-L-methionine (Cx-SAM) to 5-hydroxyuridine (ho5U) to form 5-carboxymethoxyuridine (cmo5U) at position 34 in tRNAs. In Campylobacter jejuni (strain RM1221), this protein is tRNA U34 carboxymethyltransferase.